Reading from the N-terminus, the 331-residue chain is Aldo-keto reductase YhdN (331 aa).

NADP(+) is bound by residues 20 to 21 (TW) and Asp52. Tyr57 serves as the catalytic Proton donor. NADP(+) is bound by residues Gln175, 203-208 (YGSLCR), Lys214, Arg227, 280-282 (GAR), and Gln286.

This sequence belongs to the aldo/keto reductase family. Aldo/keto reductase 11 subfamily. Monomer.

Functionally, aldo-keto reductase (AKR) that displays broad substrate specificity in vitro. Is able to reduce the standard AKR substrates DL-glyceraldehyde, D-erythrose, methylglyoxal, p-nitrobenzaldehyde, benzaldehyde and butyraldehyde, in the presence of NADPH. Cannot use NADH as a cosubstrate. Does not act on glucose, 2-pyridine carboxyaldehyde, fructose and xylose. The physiological function of this enzyme is not clear. May play a role in bacterial stress response and/or in detoxification of reactive aldehydes. In Bacillus subtilis (strain 168), this protein is Aldo-keto reductase YhdN (yhdN).